Here is a 1050-residue protein sequence, read N- to C-terminus: Integrin alpha-5 (1050 aa).

An N-terminal signal peptide occupies residues 1–32; sequence MQLPRGSRVPGLVATFLFPVLCALLTFSSVRG. Over 33 to 996 the chain is Extracellular; that stretch reads FNLAVEQPAV…IHWAKPESSY (964 aa). FG-GAP repeat units follow at residues 34-99, 116-175, 183-235, 249-301, 302-367, 368-426, and 430-493; these read NLAV…GTNC, DTPQ…NFTT, RTDF…QEAY, QTRQ…GTDL, RSLY…MEST, PHLI…GVDS, and QVLQ…ISPN. 3 N-linked (GlcNAc...) asparagine glycosylation sites follow: N75, N95, and N98. Disulfide bonds link C90-C99 and C145-C166. The N-linked (GlcNAc...) asparagine glycan is linked to N172. A disulfide bond links C182 and C195. E270, S272, D274, T276, and D278 together coordinate Ca(2+). N287, N297, and N306 each carry an N-linked (GlcNAc...) asparagine glycan. Residues D324, N326, D328, L330, D332, D390, D392, D394, D398, D454, D456, N458, Y460, and D462 each contribute to the Ca(2+) site. Residues C502 and C513 are joined by a disulfide bond. N507, N515, N521, and N600 each carry an N-linked (GlcNAc...) asparagine glycan. C519 and C575 are joined by a disulfide. C636 and C642 are oxidised to a cystine. Residues N649, N714, N763, and N861 are each glycosylated (N-linked (GlcNAc...) asparagine). C708 and C721 are joined by a disulfide. 3 disulfides stabilise this stretch: C839-C958, C862-C922, and C910-C917. A helical transmembrane segment spans residues 997–1022; the sequence is GVPLWIIILAILIGLLLLALLIYVLY. Topologically, residues 1023–1050 are cytoplasmic; that stretch reads KLGFFKRSYQYGTAMEKAELKPQAASEA. Positions 1025-1029 match the GFFKR motif motif; it reads GFFKR.

Belongs to the integrin alpha chain family. Heterodimer of an alpha and a beta subunit. The alpha subunit is composed of a heavy and a light chain linked by a disulfide bond. Alpha-5 associates with beta-1.

The protein localises to the cell membrane. It is found in the cell junction. Its subcellular location is the focal adhesion. In terms of biological role, integrin alpha-5/beta-1 (ITGA5:ITGB1) is a receptor for fibronectin. It recognizes the sequence R-G-D in its ligands. ITGA5:ITGB1 acts as a receptor for fibrillin-1 (FBN1) and mediates R-G-D-dependent cell adhesion to FBN1. ITGA5:ITGB1 acts as a receptor for fibronectin (FN1) and mediates R-G-D-dependent cell adhesion to FN1. ITGA5:ITGB1 is a receptor for IL1B and binding is essential for IL1B signaling. ITGA5:ITGB3 is a receptor for soluble CD40LG and is required for CD40/CD40LG signaling. This chain is Integrin alpha-5 (itga5), found in Xenopus laevis (African clawed frog).